The sequence spans 159 residues: SsrA-binding protein (159 aa).

Belongs to the SmpB family.

The protein localises to the cytoplasm. Required for rescue of stalled ribosomes mediated by trans-translation. Binds to transfer-messenger RNA (tmRNA), required for stable association of tmRNA with ribosomes. tmRNA and SmpB together mimic tRNA shape, replacing the anticodon stem-loop with SmpB. tmRNA is encoded by the ssrA gene; the 2 termini fold to resemble tRNA(Ala) and it encodes a 'tag peptide', a short internal open reading frame. During trans-translation Ala-aminoacylated tmRNA acts like a tRNA, entering the A-site of stalled ribosomes, displacing the stalled mRNA. The ribosome then switches to translate the ORF on the tmRNA; the nascent peptide is terminated with the 'tag peptide' encoded by the tmRNA and targeted for degradation. The ribosome is freed to recommence translation, which seems to be the essential function of trans-translation. The chain is SsrA-binding protein from Saccharophagus degradans (strain 2-40 / ATCC 43961 / DSM 17024).